A 508-amino-acid chain; its full sequence is MTKRALISVSNKDGILEFAKELVALGYEILSTGGTKKMLQDNAVAVTAVDEVTKFPEILDGRVKTLNPMIHGGLLGKFDDDSHQAQMNEHGIEPIEIVCVNLYPFVETISKPNVTWDDAIENIDIGGPTMLRSAAKNHQYVTVIVDSNDYATVLEELKAGGATTIETRRKLAAKVFRHTAAYDSYISNYLTEEEFPESLTMTYELKQNLRYGENPHQKAAFYQKRLGSDFSLAYATQLHGKELSYNNIQDGNAALQIVKEFEMPAAVAVKHMNPCGVGTGVTLEEAFDKAYEADPTSIFGGIIALNMEVDAATAEKLSHIFLEIIIAPAFSQEALDILTKKKNIRLLTIPFEQAKQDQFNVVSVEGGLLVQEPDRYGFANADIKVVTDREPTKQEWEALQLGWSVVKHVKSNAIVVTDSQMTLGVGAGQMNRVGAAKIAFEQAGEKAKGAALASDAFFPMSDTVEAAAAAGITAIIQPGGSIKDQDSIDKANEYGITMIFTGVRHFKH.

One can recognise an MGS-like domain in the interval 1–145 (MTKRALISVS…KNHQYVTVIV (145 aa)).

Belongs to the PurH family.

It catalyses the reaction (6R)-10-formyltetrahydrofolate + 5-amino-1-(5-phospho-beta-D-ribosyl)imidazole-4-carboxamide = 5-formamido-1-(5-phospho-D-ribosyl)imidazole-4-carboxamide + (6S)-5,6,7,8-tetrahydrofolate. The enzyme catalyses IMP + H2O = 5-formamido-1-(5-phospho-D-ribosyl)imidazole-4-carboxamide. It functions in the pathway purine metabolism; IMP biosynthesis via de novo pathway; 5-formamido-1-(5-phospho-D-ribosyl)imidazole-4-carboxamide from 5-amino-1-(5-phospho-D-ribosyl)imidazole-4-carboxamide (10-formyl THF route): step 1/1. It participates in purine metabolism; IMP biosynthesis via de novo pathway; IMP from 5-formamido-1-(5-phospho-D-ribosyl)imidazole-4-carboxamide: step 1/1. This Lysinibacillus sphaericus (strain C3-41) protein is Bifunctional purine biosynthesis protein PurH.